Reading from the N-terminus, the 360-residue chain is DNA replication and repair protein RecF (360 aa).

30-37 (GANGSGKT) contributes to the ATP binding site.

The protein belongs to the RecF family.

The protein localises to the cytoplasm. Its function is as follows. The RecF protein is involved in DNA metabolism; it is required for DNA replication and normal SOS inducibility. RecF binds preferentially to single-stranded, linear DNA. It also seems to bind ATP. The sequence is that of DNA replication and repair protein RecF from Acinetobacter baumannii (strain ATCC 17978 / DSM 105126 / CIP 53.77 / LMG 1025 / NCDC KC755 / 5377).